The chain runs to 247 residues: Enolase-phosphatase E1 (247 aa).

Mg(2+) contacts are provided by Asp12 and Glu14. Substrate contacts are provided by residues 141 to 142 (SS) and Lys175. Position 200 (Asp200) interacts with Mg(2+).

The protein belongs to the HAD-like hydrolase superfamily. MasA/MtnC family. As to quaternary structure, monomer. The cofactor is Mg(2+).

The protein resides in the cytoplasm. It is found in the nucleus. It catalyses the reaction 5-methylsulfanyl-2,3-dioxopentyl phosphate + H2O = 1,2-dihydroxy-5-(methylsulfanyl)pent-1-en-3-one + phosphate. It participates in amino-acid biosynthesis; L-methionine biosynthesis via salvage pathway; L-methionine from S-methyl-5-thio-alpha-D-ribose 1-phosphate: step 3/6. Its pathway is amino-acid biosynthesis; L-methionine biosynthesis via salvage pathway; L-methionine from S-methyl-5-thio-alpha-D-ribose 1-phosphate: step 4/6. Functionally, bifunctional enzyme that catalyzes the enolization of 2,3-diketo-5-methylthiopentyl-1-phosphate (DK-MTP-1-P) into the intermediate 2-hydroxy-3-keto-5-methylthiopentenyl-1-phosphate (HK-MTPenyl-1-P), which is then dephosphorylated to form the acireductone 1,2-dihydroxy-3-keto-5-methylthiopentene (DHK-MTPene). The protein is Enolase-phosphatase E1 of Drosophila willistoni (Fruit fly).